The chain runs to 398 residues: Enoyl-[acyl-carrier-protein] reductase [NADH] (398 aa).

NAD(+) is bound by residues 48–53 (GASTGY), 74–75 (FE), 111–112 (DA), and 139–140 (LA). Residue Y225 coordinates substrate. Catalysis depends on Y235, which acts as the Proton donor. Residues K244 and 273-275 (VVT) each bind NAD(+).

This sequence belongs to the TER reductase family. In terms of assembly, monomer.

The enzyme catalyses a 2,3-saturated acyl-[ACP] + NAD(+) = a (2E)-enoyl-[ACP] + NADH + H(+). The protein operates within lipid metabolism; fatty acid biosynthesis. In terms of biological role, involved in the final reduction of the elongation cycle of fatty acid synthesis (FAS II). Catalyzes the reduction of a carbon-carbon double bond in an enoyl moiety that is covalently linked to an acyl carrier protein (ACP). This Paraburkholderia phytofirmans (strain DSM 17436 / LMG 22146 / PsJN) (Burkholderia phytofirmans) protein is Enoyl-[acyl-carrier-protein] reductase [NADH].